A 154-amino-acid chain; its full sequence is Myoglobin (154 aa).

The region spanning 2 to 148 is the Globin domain; that stretch reads GLSDGEWQLV…FRNDMATKYK (147 aa). A Phosphoserine modification is found at Ser4. His65 lines the nitrite pocket. His65 contacts O2. His94 contributes to the heme b binding site.

It belongs to the globin family. Monomeric.

It localises to the cytoplasm. Its subcellular location is the sarcoplasm. It catalyses the reaction Fe(III)-heme b-[protein] + nitric oxide + H2O = Fe(II)-heme b-[protein] + nitrite + 2 H(+). It carries out the reaction H2O2 + AH2 = A + 2 H2O. Functionally, monomeric heme protein which primary function is to store oxygen and facilitate its diffusion within muscle tissues. Reversibly binds oxygen through a pentacoordinated heme iron and enables its timely and efficient release as needed during periods of heightened demand. Depending on the oxidative conditions of tissues and cells, and in addition to its ability to bind oxygen, it also has a nitrite reductase activity whereby it regulates the production of bioactive nitric oxide. Under stress conditions, like hypoxia and anoxia, it also protects cells against reactive oxygen species thanks to its pseudoperoxidase activity. This chain is Myoglobin (MB), found in Tachyglossus aculeatus aculeatus (Southeast Australian short-beaked echidna).